We begin with the raw amino-acid sequence, 463 residues long: Chromosomal replication initiator protein DnaA (463 aa).

The segment at 1 to 83 (MSTNQIILTD…LQLFQHYNNT (83 aa)) is domain I, interacts with DnaA modulators. The domain II stretch occupies residues 83–124 (TIKSIEIITKELPGTTQTVTELPTKTFADIGSSELNSENIFS). The tract at residues 125 to 343 (TLDVRFTFDN…GALNKVIAHS (219 aa)) is domain III, AAA+ region. 4 residues coordinate ATP: Gly-171, Gly-173, Lys-174, and Thr-175. The segment at 344 to 463 (NFTLKEITLE…IHLLMKILQN (120 aa)) is domain IV, binds dsDNA.

Belongs to the DnaA family. As to quaternary structure, oligomerizes as a right-handed, spiral filament on DNA at oriC.

Its subcellular location is the cytoplasm. Its function is as follows. Plays an essential role in the initiation and regulation of chromosomal replication. ATP-DnaA binds to the origin of replication (oriC) to initiate formation of the DNA replication initiation complex once per cell cycle. Binds the DnaA box (a 9 base pair repeat at the origin) and separates the double-stranded (ds)DNA. Forms a right-handed helical filament on oriC DNA; dsDNA binds to the exterior of the filament while single-stranded (ss)DNA is stabiized in the filament's interior. The ATP-DnaA-oriC complex binds and stabilizes one strand of the AT-rich DNA unwinding element (DUE), permitting loading of DNA polymerase. After initiation quickly degrades to an ADP-DnaA complex that is not apt for DNA replication. Binds acidic phospholipids. In Rickettsia africae (strain ESF-5), this protein is Chromosomal replication initiator protein DnaA.